We begin with the raw amino-acid sequence, 247 residues long: Cell division protein ZapD (247 aa).

It belongs to the ZapD family. Interacts with FtsZ.

Its subcellular location is the cytoplasm. In terms of biological role, cell division factor that enhances FtsZ-ring assembly. Directly interacts with FtsZ and promotes bundling of FtsZ protofilaments, with a reduction in FtsZ GTPase activity. The sequence is that of Cell division protein ZapD from Shigella sonnei (strain Ss046).